The sequence spans 622 residues: MAAPIAEELAKKQQAISVAEFFEKNRQILGFDSAPRSLITTVKEAVDNSLDACEEAEILPDILLHIERVGKDNVSVIVEDNGPGIVKEQIPKVFAKLLYGSRFHALKQSRGQQGIGISASVLYAQLTAGHPTSVISKIGPDSPAHHYEVMINTSTNDPEILLDEVIDWDRPHGTRVELEMEASYVKGRRQSIYEYLKATAIVNPHARLTLIEPDGNEVIFDRATDKLPIPAKEILPHPHGIELGTLMKMLRYTDRQKLAPFLRYSFSKIGLLTAEEICKAAGLDTEMLPSKLTRDQTKKLLDAFKKVKIMAPPTDCLSPIGEELIYKGLEKEFNVDFIATTTRSPSVFSGNPFVVEVGIAYGGVLQKDDRIDIMRFANRVPLLYQQGGCATTHAVEGIKWKQYGLNQPGGGMPTGPVVLLVHVASTNVPFTSESKDAIADIPEIRDEVELAIKEVSRKLNRYLNRQVSLKKRREKEIIITKVLPKMAQKLADTLERDLPDINPVVAKVMGNLLVMRHVEHGANGDAAVTIKVKNFGSKLTEFKLHDMLPYEISDVSPEPKVISMGSDFDYVWTMKVSPEGSKAVTYSLSSMSEDEIKRLPQLIVEGLDEELVTGAKAIKGLI.

ATP is bound by residues Asn48, Asp80, 101–102 (SR), 111–118 (GQQGIGIS), and Lys435.

Belongs to the TOP6B family. In terms of assembly, homodimer. Heterotetramer of two Top6A and two Top6B chains.

The enzyme catalyses ATP-dependent breakage, passage and rejoining of double-stranded DNA.. In terms of biological role, relaxes both positive and negative superturns and exhibits a strong decatenase activity. The chain is Type 2 DNA topoisomerase 6 subunit B from Methanococcoides burtonii (strain DSM 6242 / NBRC 107633 / OCM 468 / ACE-M).